The primary structure comprises 499 residues: Glycerol kinase (499 aa).

An ADP-binding site is contributed by T15. ATP-binding residues include T15, T16, and S17. A sn-glycerol 3-phosphate-binding site is contributed by T15. ADP is bound at residue R19. Residues R85, E86, Y137, and D246 each coordinate sn-glycerol 3-phosphate. The glycerol site is built by R85, E86, Y137, D246, and Q247. T268 and G311 together coordinate ADP. ATP contacts are provided by T268, G311, Q315, and G412. ADP contacts are provided by G412 and N416.

The protein belongs to the FGGY kinase family.

The enzyme catalyses glycerol + ATP = sn-glycerol 3-phosphate + ADP + H(+). The protein operates within polyol metabolism; glycerol degradation via glycerol kinase pathway; sn-glycerol 3-phosphate from glycerol: step 1/1. Its activity is regulated as follows. Inhibited by fructose 1,6-bisphosphate (FBP). Functionally, key enzyme in the regulation of glycerol uptake and metabolism. Catalyzes the phosphorylation of glycerol to yield sn-glycerol 3-phosphate. This chain is Glycerol kinase, found in Parabacteroides distasonis (strain ATCC 8503 / DSM 20701 / CIP 104284 / JCM 5825 / NCTC 11152).